A 284-amino-acid polypeptide reads, in one-letter code: NADH-cytochrome b5 reductase 1 (284 aa).

A helical membrane pass occupies residues 7 to 27 (KLVVVIVIVVVPLLFKFIIGP). The 105-residue stretch at 38–142 (NDFQSFPLVE…KGPRGNYHYE (105 aa)) folds into the FAD-binding FR-type domain. 148 to 180 (HLGMIAGGTGIAPMYQIMKAIAMDSHDTTKVSL) contacts FAD.

It belongs to the flavoprotein pyridine nucleotide cytochrome reductase family. In terms of assembly, monomer. Component of the 2-(3-amino-3-carboxypropyl)histidine synthase complex composed of DPH1, DPH2, KTI11/DPH3 and a NADH-dependent reductase, predominantly CBR1. Interacts with KTI11/DPH3. Interacts with STE20. The cofactor is FAD.

It is found in the mitochondrion outer membrane. It carries out the reaction 2 Fe(III)-[cytochrome b5] + NADH = 2 Fe(II)-[cytochrome b5] + NAD(+) + H(+). It catalyses the reaction 2 Fe(3+)-[Dph3] + NADH = 2 Fe(2+)-[Dph3] + NAD(+) + H(+). Its pathway is protein modification; peptidyl-diphthamide biosynthesis. Its activity is regulated as follows. Competitively inhibited by NAD(+). Inhibited by mercurials such as p-chloromercuribenzoate (PCMB) and HgCl(2). Enzymatic activity increases under anaerobic conditions. NADH-dependent reductase for KTI11/DPH3 and cytochrome b5. Required for the first step of diphthamide biosynthesis, a post-translational modification of histidine which occurs in elongation factor 2. DPH1 and DPH2 transfer a 3-amino-3-carboxypropyl (ACP) group from S-adenosyl-L-methionine (SAM) to a histidine residue, the reaction is assisted by a reduction system comprising KTI11/DPH3 and a NADH-dependent reductase, predominantly CBR1. By reducing KTI11/DPH3, also involved in the formation of the tRNA wobble base modification mcm5s 2U (5-methoxycarbonylmethyl-2-thiouridine), mediated by the elongator complex. The cytochrome b5/NADH cytochrome b5 reductase electron transfer system supports the catalytic activity of several sterol biosynthetic enzymes. Plays a role in bud morphology. This is NADH-cytochrome b5 reductase 1 (CBR1) from Saccharomyces cerevisiae (strain YJM789) (Baker's yeast).